Here is a 354-residue protein sequence, read N- to C-terminus: CREB/ATF bZIP transcription factor (354 aa).

Disordered regions lie at residues 1 to 95 (MRHS…PGEE), 113 to 156 (PRQP…AAEM), and 171 to 214 (GGCS…RKAA). A Phosphoserine modification is found at Ser50. The span at 121-132 (DPGLSSPGPLSS) shows a compositional bias: low complexity. Composition is skewed to gly residues over residues 133 to 143 (SGGGSDSGGLW) and 190 to 199 (PGGGGGGGSG). One can recognise a bZIP domain in the interval 204–267 (QAATKSPRKA…QALQEESRYL (64 aa)). Positions 205–214 (AATKSPRKAA) are enriched in low complexity. The tract at residues 219-226 (RLNRLKKK) is basic motif. The interval 232-267 (LESRVRGLAAENQELRAENRELGKRVQALQEESRYL) is leucine-zipper. Residues 303–306 (DHDY) carry the HCFC1-binding motif (HBM) motif.

This sequence belongs to the bZIP family. ATF subfamily. In terms of assembly, interacts with HCFC1; the interaction inhibits CREB3 transcriptional activity. Interacts with CREB3; the interaction occurs only in combination with HCFC1. As to expression, in adults, expressed most abundantly in heart, liver and skeletal muscle, moderately abundant in kidney and pancreas, and barely detectable in lung. In fetal tissues, expressed most abundantly in kidney and very low amounts in heart, lung and liver.

It localises to the nucleus. In terms of biological role, strongly activates transcription when bound to HCFC1. Suppresses the expression of HSV proteins in cells infected with the virus in a HCFC1-dependent manner. Also suppresses the HCFC1-dependent transcriptional activation by CREB3 and reduces the amount of CREB3 in the cell. Able to down-regulate expression of some cellular genes in CREBZF-expressing cells. The sequence is that of CREB/ATF bZIP transcription factor (CREBZF) from Homo sapiens (Human).